A 372-amino-acid polypeptide reads, in one-letter code: MSHQHILTLFNLLPVATNISTWWNFGSMLLTCSIIQMTTGFFLAIHYTANTNLAFSSVIHILRDIPNGWCLQNLHSIGASMFFICIYIHIARGLYFGSYMNKKVWMSGILLLTILMATSFFGYVLPWGQMSFWAATVITNLLTAVPYLGTNLTIWLWGGFAINDPTLTRFFALHFILPFMIMSTSSIHIILLHEEGSSNPLGTNSDIDKIPFHPYHSYKDLFMLTLLLFTMMSIMSFSPDMFNDSENFSKANPMMTPQHIKPEWYFLFAYGILRSIPNKLGGTLALLLSIMILLLPPFTHTSHIRSMTFRPMAQFLFWTMITTFVILTWAASKPVESPYITISQMASTMYFLFFIINPLLGWMENKILNTNH.

Helical transmembrane passes span 25-45, 69-90, 105-125, and 170-190; these read FGSMLLTCSIIQMTTGFFLAI, WCLQNLHSIGASMFFICIYIHI, WMSGILLLTILMATSFFGYVL, and FFALHFILPFMIMSTSSIHII. 2 residues coordinate heme b: H75 and H89. Residues H174 and H188 each coordinate heme b. H193 is an a ubiquinone binding site. A run of 4 helical transmembrane segments spans residues 218–238, 280–300, 312–332, and 339–358; these read YKDLFMLTLLLFTMMSIMSFS, LGGTLALLLSIMILLLPPFTH, MAQFLFWTMITTFVILTWAAS, and YITISQMASTMYFLFFIINP.

This sequence belongs to the cytochrome b family. In terms of assembly, the cytochrome bc1 complex contains 3 respiratory subunits (MT-CYB, CYC1 and UQCRFS1), 2 core proteins (UQCRC1 and UQCRC2) and probably 6 low-molecular weight proteins. The cofactor is heme b.

Its subcellular location is the mitochondrion inner membrane. Component of the ubiquinol-cytochrome c reductase complex (complex III or cytochrome b-c1 complex) that is part of the mitochondrial respiratory chain. The b-c1 complex mediates electron transfer from ubiquinol to cytochrome c. Contributes to the generation of a proton gradient across the mitochondrial membrane that is then used for ATP synthesis. In Acrochordus granulatus (Rasp-skinned water snake), this protein is Cytochrome b (MT-CYB).